The primary structure comprises 243 residues: Peptidyl-tRNA hydrolase (243 aa).

Tyr14 provides a ligand contact to tRNA. The active-site Proton acceptor is the His19. TRNA is bound by residues Phe64, Asn66, and Asn112. The interval 188–243 (GGKAEEEKPRKDNKTTEKKPAGQSHIHQARNHNQPKVLTTGPMADILKKMFGNKGE) is disordered. Over residues 190–207 (KAEEEKPRKDNKTTEKKP) the composition is skewed to basic and acidic residues.

The protein belongs to the PTH family. In terms of assembly, monomer.

It localises to the cytoplasm. The catalysed reaction is an N-acyl-L-alpha-aminoacyl-tRNA + H2O = an N-acyl-L-amino acid + a tRNA + H(+). Its function is as follows. Hydrolyzes ribosome-free peptidyl-tRNAs (with 1 or more amino acids incorporated), which drop off the ribosome during protein synthesis, or as a result of ribosome stalling. In terms of biological role, catalyzes the release of premature peptidyl moieties from peptidyl-tRNA molecules trapped in stalled 50S ribosomal subunits, and thus maintains levels of free tRNAs and 50S ribosomes. The protein is Peptidyl-tRNA hydrolase of Rhizobium leguminosarum bv. trifolii (strain WSM2304).